The chain runs to 273 residues: MKPFCVFLTFFLLLAASSKKVDSAETVSFNFNSFSEGNPAINFQGDVTVLSNGNIQLTNLNKVNSVGRVLYAMPVRIWSSATGNVASFLTSFSFEMKDIKDYDPADGIIFFIAPEDTQIPAGSIGGGTLGVSDTKGAGHFVGVEFDTYSNSEYNDPPTDHVGIDVNSVDSVKTVPWNSVSGAVVKVTVIYDSSTKTLSVAVTNDNGDITTIAQVVDLKAKLPERVKFGFSASGSLGGRQIHLIRSWSFTSTLITTTRRSIDNNEKKIMNMASA.

The first 23 residues, 1 to 23 (MKPFCVFLTFFLLLAASSKKVDS), serve as a signal peptide directing secretion. Residues Glu144 and Asp146 each coordinate Mn(2+). The Ca(2+) site is built by Asp146, Tyr148, Asn150, and Asp155. Mn(2+) contacts are provided by Asp155 and His160.

The protein belongs to the leguminous lectin family. As to quaternary structure, homotetramer.

In terms of biological role, D-galactose specific lectin. This Arachis hypogaea (Peanut) protein is Galactose-binding lectin.